Reading from the N-terminus, the 228-residue chain is Ribose-5-phosphate isomerase A (228 aa).

Substrate is bound by residues 28-31 (TGST), 84-87 (DGAD), and 97-100 (KGGG). Glu106 functions as the Proton acceptor in the catalytic mechanism. Lys124 contacts substrate.

This sequence belongs to the ribose 5-phosphate isomerase family. In terms of assembly, homodimer.

The enzyme catalyses aldehydo-D-ribose 5-phosphate = D-ribulose 5-phosphate. It functions in the pathway carbohydrate degradation; pentose phosphate pathway; D-ribose 5-phosphate from D-ribulose 5-phosphate (non-oxidative stage): step 1/1. Catalyzes the reversible conversion of ribose-5-phosphate to ribulose 5-phosphate. The polypeptide is Ribose-5-phosphate isomerase A (Levilactobacillus brevis (strain ATCC 367 / BCRC 12310 / CIP 105137 / JCM 1170 / LMG 11437 / NCIMB 947 / NCTC 947) (Lactobacillus brevis)).